A 770-amino-acid chain; its full sequence is MVAPALLPELWTEILVPICAVIGIAFSLFQWYVVSRVKLTSDLGASSSGGANNGKNGYGDYLIEEEEGVNDQSVVAKCAEIQTAISEGATSFLFTEYKYVGVFMIFFAAVIFVFLGSVEGFSTDNKPCTYDTTRTCKPALATAAFSTIAFVLGAVTSVLSGFLGMKIATYANARTTLEARKGVGKAFIVAFRSGAVMGFLLAASGLLVLYITINVFKIYYGDDWEGLFEAITGYGLGGSSMALFGRVGGGIYTKAADVGADLVGKIERNIPEDDPRNPAVIADNVGDNVGDIAGMGSDLFGSYAEASCAALVVASISSFGINHDFTAMCYPLLISSMGILVCLITTLFATDFFEIKLVKEIEPALKNQLIISTVIMTVGIAIVSWVGLPTSFTIFNFGTQKVVKNWQLFLCVCVGLWAGLIIGFVTEYYTSNAYSPVQDVADSCRTGAATNVIFGLALGYKSVIIPIFAIAISIFVSFSFAAMYGVAVAALGMLSTIATGLAIDAYGPISDNAGGIAEMAGMSHRIRERTDALDAAGNTTAAIGKGFAIGSAALVSLALFGAFVSRAGIHTVDVLTPKVIIGLLVGAMLPYWFSAMTMKSVGSAALKMVEEVRRQFNTIPGLMEGTAKPDYATCVKISTDASIKEMIPPGCLVMLTPLIVGFFFGVETLSGVLAGSLVSGVQIAISASNTGGAWDNAKKYIEAGVSEHAKSLGPKGSEPHKAAVIGDTIGDPLKDTSGPSLNILIKLMAVESLVFAPFFATHGGILFKYF.

The Intravacuolar segment spans residues 1 to 9; it reads MVAPALLPE. Residues 10–36 traverse the membrane as a helical segment; the sequence is LWTEILVPICAVIGIAFSLFQWYVVSR. Residues 37 to 88 lie on the Cytoplasmic side of the membrane; sequence VKLTSDLGASSSGGANNGKNGYGDYLIEEEEGVNDQSVVAKCAEIQTAISEG. A helical membrane pass occupies residues 89 to 118; it reads ATSFLFTEYKYVGVFMIFFAAVIFVFLGSV. The Intravacuolar portion of the chain corresponds to 119 to 139; it reads EGFSTDNKPCTYDTTRTCKPA. Residues Cys-128 and Cys-136 are joined by a disulfide bond. Residues 140–167 form a helical membrane-spanning segment; the sequence is LATAAFSTIAFVLGAVTSVLSGFLGMKI. Topologically, residues 168–190 are cytoplasmic; sequence ATYANARTTLEARKGVGKAFIVA. Residues 191–220 form a helical membrane-spanning segment; sequence FRSGAVMGFLLAASGLLVLYITINVFKIYY. The Intravacuolar segment spans residues 221-223; sequence GDD. The chain crosses the membrane as a helical span at residues 224 to 252; sequence WEGLFEAITGYGLGGSSMALFGRVGGGIY. Over 253 to 290 the chain is Cytoplasmic; the sequence is TKAADVGADLVGKIERNIPEDDPRNPAVIADNVGDNVG. A substrate-binding site is contributed by Lys-254. Asp-257, Asp-261, and Asp-287 together coordinate Mg(2+). Residues 291–316 form a helical membrane-spanning segment; sequence DIAGMGSDLFGSYAEASCAALVVASI. The Intravacuolar portion of the chain corresponds to 317–324; sequence SSFGINHD. A helical membrane pass occupies residues 325–350; the sequence is FTAMCYPLLISSMGILVCLITTLFAT. Topologically, residues 351–358 are cytoplasmic; it reads DFFEIKLV. Residues 359 to 386 form a helical membrane-spanning segment; that stretch reads KEIEPALKNQLIISTVIMTVGIAIVSWV. Residues 387–405 lie on the Intravacuolar side of the membrane; sequence GLPTSFTIFNFGTQKVVKN. A helical transmembrane segment spans residues 406-429; the sequence is WQLFLCVCVGLWAGLIIGFVTEYY. At 430–451 the chain is on the cytoplasmic side; sequence TSNAYSPVQDVADSCRTGAATN. The chain crosses the membrane as a helical span at residues 452-476; that stretch reads VIFGLALGYKSVIIPIFAIAISIFV. The Intravacuolar segment spans residues 477-482; that stretch reads SFSFAA. A helical transmembrane segment spans residues 483–509; it reads MYGVAVAALGMLSTIATGLAIDAYGPI. Topologically, residues 510–538 are cytoplasmic; that stretch reads SDNAGGIAEMAGMSHRIRERTDALDAAGN. Mg(2+)-binding residues include Asp-511 and Asn-538. A helical membrane pass occupies residues 539 to 567; that stretch reads TTAAIGKGFAIGSAALVSLALFGAFVSRA. Topologically, residues 568 to 577 are intravacuolar; that stretch reads GIHTVDVLTP. A helical transmembrane segment spans residues 578–606; the sequence is KVIIGLLVGAMLPYWFSAMTMKSVGSAAL. At 607–635 the chain is on the cytoplasmic side; it reads KMVEEVRRQFNTIPGLMEGTAKPDYATCV. A helical membrane pass occupies residues 636–664; sequence KISTDASIKEMIPPGCLVMLTPLIVGFFF. Position 665 (Gly-665) is a topological domain, intravacuolar. Residues 666–693 form a helical membrane-spanning segment; it reads VETLSGVLAGSLVSGVQIAISASNTGGA. The Cytoplasmic portion of the chain corresponds to 694–736; it reads WDNAKKYIEAGVSEHAKSLGPKGSEPHKAAVIGDTIGDPLKDT. The Mg(2+) site is built by Asp-695 and Asp-731. Lys-734 contacts substrate. A helical transmembrane segment spans residues 737–762; the sequence is SGPSLNILIKLMAVESLVFAPFFATH. Topologically, residues 763–770 are intravacuolar; the sequence is GGILFKYF.

The protein belongs to the H(+)-translocating pyrophosphatase (TC 3.A.10) family. K(+)-stimulated subfamily. In terms of assembly, monomer. In terms of tissue distribution, ubiquitous (at protein level). Mostly expressed in vascular tissues, meristems and root pericycle.

The protein resides in the vacuole membrane. Its subcellular location is the endosome membrane. The protein localises to the cell membrane. The enzyme catalyses diphosphate + H2O + H(+)(in) = 2 phosphate + 2 H(+)(out). Its activity is regulated as follows. Activated by K(+) and Mg(2+). Inhibited by Ca(2+), N,N'-dicyclohexylcarbodiimide (DCCD), N-ethylmaleimide (NEM) and aminomethylenediphosphonate (AMDP), and, to a lower extent, by fluoride (KF). In terms of biological role, contributes to the transtonoplast (from cytosol to vacuole lumen) H(+)-electrochemical potential difference. It establishes a proton gradient of similar and often greater magnitude than the H(+)-ATPase on the same membrane. In addition, facilitates auxin transport by modulating apoplastic pH and regulates auxin-mediated developmental processes. Confers tolerance to NaCl and to drought by increasing ion retention. This Arabidopsis thaliana (Mouse-ear cress) protein is Pyrophosphate-energized vacuolar membrane proton pump 1 (AVP1).